Reading from the N-terminus, the 614-residue chain is 1-deoxy-D-xylulose-5-phosphate synthase (614 aa).

Residues His-74 and 115-117 (AHS) each bind thiamine diphosphate. Position 146 (Asp-146) interacts with Mg(2+). Residues 147-148 (GA), Asn-175, Tyr-282, and Glu-363 contribute to the thiamine diphosphate site. Residue Asn-175 coordinates Mg(2+).

Belongs to the transketolase family. DXPS subfamily. As to quaternary structure, homodimer. Requires Mg(2+) as cofactor. It depends on thiamine diphosphate as a cofactor.

The enzyme catalyses D-glyceraldehyde 3-phosphate + pyruvate + H(+) = 1-deoxy-D-xylulose 5-phosphate + CO2. It functions in the pathway metabolic intermediate biosynthesis; 1-deoxy-D-xylulose 5-phosphate biosynthesis; 1-deoxy-D-xylulose 5-phosphate from D-glyceraldehyde 3-phosphate and pyruvate: step 1/1. In terms of biological role, catalyzes the acyloin condensation reaction between C atoms 2 and 3 of pyruvate and glyceraldehyde 3-phosphate to yield 1-deoxy-D-xylulose-5-phosphate (DXP). This chain is 1-deoxy-D-xylulose-5-phosphate synthase, found in Nitrosomonas europaea (strain ATCC 19718 / CIP 103999 / KCTC 2705 / NBRC 14298).